Here is a 125-residue protein sequence, read N- to C-terminus: Large ribosomal subunit protein bL12 (125 aa).

Belongs to the bacterial ribosomal protein bL12 family. In terms of assembly, homodimer. Part of the ribosomal stalk of the 50S ribosomal subunit. Forms a multimeric L10(L12)X complex, where L10 forms an elongated spine to which 2 to 4 L12 dimers bind in a sequential fashion. Binds GTP-bound translation factors.

Its function is as follows. Forms part of the ribosomal stalk which helps the ribosome interact with GTP-bound translation factors. Is thus essential for accurate translation. The chain is Large ribosomal subunit protein bL12 from Erythrobacter litoralis (strain HTCC2594).